Here is a 463-residue protein sequence, read N- to C-terminus: L-2-hydroxyglutarate dehydrogenase, mitochondrial (463 aa).

The transit peptide at 1–52 directs the protein to the mitochondrion; the sequence is MVPALRYLGSVCGRARGIFPGGFSAAHTPASGKSRLLCQGGRRASTSSFDIV. N6-acetyllysine is present on residues lysine 104 and lysine 173.

It belongs to the L2HGDH family. Requires FAD as cofactor.

Its subcellular location is the mitochondrion. It catalyses the reaction (S)-2-hydroxyglutarate + A = 2-oxoglutarate + AH2. This Bos taurus (Bovine) protein is L-2-hydroxyglutarate dehydrogenase, mitochondrial (L2HGDH).